The following is a 1149-amino-acid chain: Bone sialoprotein-binding protein (1149 aa).

Residues 1 to 52 (MINRDNKKAITKKGMISNRLNKFSIRKYTVGTASILVGTTLIFGLGNQEAKA) form the signal peptide. The ligand binding A region stretch occupies residues 53–601 (AENTSTENAK…GDGTVKPEEK (549 aa)). 2 disordered regions span residues 54 to 249 (ENTS…TAPT) and 675 to 697 (LPTK…VTVK). A compositionally biased stretch (basic and acidic residues) spans 61-75 (AKQDEASASDNKEVV). A compositionally biased stretch (polar residues) spans 77 to 89 (ETENNSTQKNDLT). Positions 92–106 (IKKETNTDSHQEAKE) are enriched in basic and acidic residues. Residues 109–126 (TTSSTQQQQNNATTSTET) are compositionally biased toward low complexity. Over residues 130–145 (NIEKENVKPSTDKTAT) the composition is skewed to basic and acidic residues. Over residues 158 to 205 (PNNTNNDVTTKPSTSEIQTTPTTPQESTNIENSQPQPTPSKVDNQVTD) the composition is skewed to polar residues. The segment covering 216–241 (SKEELKNNPEKLKELVRNDSNTDRST) has biased composition (basic and acidic residues). CNA-B domains are found at residues 602 to 714 (LYKI…YKEP), 715 to 824 (KYNL…YKTP), and 825 to 935 (KYSL…EEDT). The disordered stretch occupies residues 896-1124 (TQTGTNTTED…TGSENNGSNN (229 aa)). Acidic residues-rich tracts occupy residues 903 to 913 (TEDDKDADGGE) and 930 to 1088 (YFEE…DSDS). The LPXTG sorting signal signature appears at 1112 to 1116 (LPETG). T1115 carries the pentaglycyl murein peptidoglycan amidated threonine modification. Positions 1116–1149 (GSENNGSNNATLFGGLFAALGSLLLFGRRKKQNK) are cleaved as a propeptide — removed by sortase.

This sequence belongs to the serine-aspartate repeat-containing protein (SDr) family.

It localises to the secreted. Its subcellular location is the cell wall. In terms of biological role, specifically interacts with bone sialoprotein (BSP), a glycoprotein of bone and dentin extracellular matrix. Could contribute to staphylococcal osteomyelitis and arthritis. This chain is Bone sialoprotein-binding protein (bbp), found in Staphylococcus aureus.